Here is a 211-residue protein sequence, read N- to C-terminus: Uracil phosphoribosyltransferase (211 aa).

5-phospho-alpha-D-ribose 1-diphosphate-binding positions include arginine 78, arginine 103, and 130 to 138 (DPMLATGAT). Residues isoleucine 195 and 200–202 (GDA) contribute to the uracil site. 5-phospho-alpha-D-ribose 1-diphosphate is bound at residue aspartate 201.

The protein belongs to the UPRTase family. Mg(2+) is required as a cofactor.

The catalysed reaction is UMP + diphosphate = 5-phospho-alpha-D-ribose 1-diphosphate + uracil. The protein operates within pyrimidine metabolism; UMP biosynthesis via salvage pathway; UMP from uracil: step 1/1. Its activity is regulated as follows. Allosterically activated by GTP. In terms of biological role, catalyzes the conversion of uracil and 5-phospho-alpha-D-ribose 1-diphosphate (PRPP) to UMP and diphosphate. The chain is Uracil phosphoribosyltransferase from Renibacterium salmoninarum (strain ATCC 33209 / DSM 20767 / JCM 11484 / NBRC 15589 / NCIMB 2235).